Here is a 540-residue protein sequence, read N- to C-terminus: Probable protein kinase UbiB (540 aa).

A helical membrane pass occupies residues 24–44; the sequence is LLFEQPLLPWWLASLRLLMPW. Residues 126–494 form the Protein kinase domain; it reads RFDVEPLASA…RRRQGDRWAL (369 aa). ATP-binding positions include 132–140 and Lys154; that span reads LASASVAQV. Catalysis depends on Asp289, which acts as the Proton acceptor. 2 helical membrane-spanning segments follow: residues 496–516 and 518–538; these read LLGAGLLGGGAVLAAGAAEAA and LAAPAAWPAWLMLAAGLYLIV.

Belongs to the ABC1 family. UbiB subfamily.

The protein localises to the cell inner membrane. Its pathway is cofactor biosynthesis; ubiquinone biosynthesis [regulation]. In terms of biological role, is probably a protein kinase regulator of UbiI activity which is involved in aerobic coenzyme Q (ubiquinone) biosynthesis. The sequence is that of Probable protein kinase UbiB from Pseudomonas putida (strain GB-1).